Here is a 345-residue protein sequence, read N- to C-terminus: Glycerol-3-phosphate dehydrogenase [NAD(P)+] (345 aa).

Residues Ser23, Tyr24, His44, and Lys118 each coordinate NADPH. Lys118, Gly147, and Thr149 together coordinate sn-glycerol 3-phosphate. Residue Ala151 participates in NADPH binding. The sn-glycerol 3-phosphate site is built by Lys203, Asp256, Ser266, Arg267, and Asn268. Lys203 serves as the catalytic Proton acceptor. An NADPH-binding site is contributed by Arg267. NADPH contacts are provided by Val291 and Glu293.

This sequence belongs to the NAD-dependent glycerol-3-phosphate dehydrogenase family.

It is found in the cytoplasm. It catalyses the reaction sn-glycerol 3-phosphate + NAD(+) = dihydroxyacetone phosphate + NADH + H(+). The catalysed reaction is sn-glycerol 3-phosphate + NADP(+) = dihydroxyacetone phosphate + NADPH + H(+). It functions in the pathway membrane lipid metabolism; glycerophospholipid metabolism. Its function is as follows. Catalyzes the reduction of the glycolytic intermediate dihydroxyacetone phosphate (DHAP) to sn-glycerol 3-phosphate (G3P), the key precursor for phospholipid synthesis. The polypeptide is Glycerol-3-phosphate dehydrogenase [NAD(P)+] (Vibrio parahaemolyticus serotype O3:K6 (strain RIMD 2210633)).